We begin with the raw amino-acid sequence, 469 residues long: Probable lysophospholipase BODYGUARD 1 (469 aa).

An N-terminal signal peptide occupies residues 1-45 (MGFSRSLNRTVGVFVFFILDIVDFLLCFTYKTLDFFFESEWKPCY). Cys46 carries the N-palmitoyl cysteine lipid modification. The AB hydrolase-1 domain maps to 185–439 (VVFIHGFLSS…IHVVPDKDHI (255 aa)). His189 is an active-site residue. The active-site Nucleophile is Ser263. Catalysis depends on charge relay system residues Asp410 and His438.

As to expression, expressed exclusively in protodermal and epidermal cells of all organs, especially on adaxial sides.

Its subcellular location is the cell membrane. The protein resides in the secreted. The protein localises to the cell wall. In terms of biological role, controls cuticle development and morphogenesis, by promoting cutin and suberin monomers loading. Involved in the regulation of abscissic acid (ABA) biosynthesis in response to osmotic stress. Plays an important role in osmotic stress and drought resistance. Required to ensure a reduced permeability of aerial tissue, thus preventing transpiration. Regulates lateral root hair development. Its function is as follows. Required for infection by the pathogenic necrotrophic fungus Botrytis cinerea, probably by regulating structural traits of the cuticle. The polypeptide is Probable lysophospholipase BODYGUARD 1 (Arabidopsis thaliana (Mouse-ear cress)).